Reading from the N-terminus, the 164-residue chain is Translation initiation factor IF-3 (164 aa).

Belongs to the IF-3 family. As to quaternary structure, monomer.

The protein resides in the cytoplasm. IF-3 binds to the 30S ribosomal subunit and shifts the equilibrium between 70S ribosomes and their 50S and 30S subunits in favor of the free subunits, thus enhancing the availability of 30S subunits on which protein synthesis initiation begins. The protein is Translation initiation factor IF-3 of Bordetella bronchiseptica (strain ATCC BAA-588 / NCTC 13252 / RB50) (Alcaligenes bronchisepticus).